The following is a 640-amino-acid chain: 1,4-alpha-glucan branching enzyme GlgB (640 aa).

Aspartate 318 serves as the catalytic Nucleophile. Catalysis depends on glutamate 371, which acts as the Proton donor.

The protein belongs to the glycosyl hydrolase 13 family. GlgB subfamily. Monomer.

The catalysed reaction is Transfers a segment of a (1-&gt;4)-alpha-D-glucan chain to a primary hydroxy group in a similar glucan chain.. Its pathway is glycan biosynthesis; glycogen biosynthesis. Catalyzes the formation of the alpha-1,6-glucosidic linkages in glycogen by scission of a 1,4-alpha-linked oligosaccharide from growing alpha-1,4-glucan chains and the subsequent attachment of the oligosaccharide to the alpha-1,6 position. In Francisella tularensis subsp. holarctica (strain FTNF002-00 / FTA), this protein is 1,4-alpha-glucan branching enzyme GlgB.